Consider the following 2931-residue polypeptide: Probable polyketide synthase 9/36 (2931 aa).

The region spanning 11 to 442 (EKGVAIVGIG…GSNCCLLISE (432 aa)) is the Ketosynthase family 3 (KS3) domain. Catalysis depends on for beta-ketoacyl synthase activity residues Cys181, His323, and His362. The tract at residues 635 to 668 (GVNPSFILGHSLGEISASYCSGMIDLDTFCYTVY) is acyl/malonyl transferase. The active-site For acyl/malonyl transferase activity is the Ser645. Residues 925–1047 (IDHLGTSNSY…ANFQLLDHGN (123 aa)) are N-terminal hotdog fold. The PKS/mFAS DH domain occupies 925-1209 (IDHLGTSNSY…CKSLIPIKDS (285 aa)). The Proton acceptor; for dehydratase activity role is filled by His959. The segment at 1064–1209 (NLSKLTKNEL…CKSLIPIKDS (146 aa)) is C-terminal hotdog fold. Asp1122 acts as the Proton donor; for dehydratase activity in catalysis. A helical membrane pass occupies residues 2293–2313 (LINFVMASSAISLIGSTDLCT). In terms of domain architecture, Carrier spans 2429–2506 (TGNKNIDELF…TSMKMILNSL (78 aa)). An O-(pantetheine 4'-phosphoryl)serine modification is found at Ser2466. The helical transmembrane segment at 2553-2573 (KIILLTGTTGFLGGFLLFNMV) threads the bilayer.

Pantetheine 4'-phosphate is required as a cofactor.

Its subcellular location is the membrane. Its function is as follows. Probable polyketide synthase. The sequence is that of Probable polyketide synthase 9/36 (pks9) from Dictyostelium discoideum (Social amoeba).